The following is a 499-amino-acid chain: Potassium voltage-gated channel subfamily A member 2 (499 aa).

Residues 1 to 26 (MTVATEDPADEAAALPGHPQDTYDPE) form a disordered region. The tract at residues 1–125 (MTVATEDPAD…YELGEEAMEM (125 aa)) is tetramerization domain. The Cytoplasmic segment spans residues 1-160 (MTVATEDPAD…LLFEYPESSG (160 aa)). Residues 161-182 (PARIIAIVSVMVILISIVSFCL) form a helical membrane-spanning segment. The Extracellular segment spans residues 183-221 (ETLPIFRDENEDMHGSGMTFHTYSNSTAGYQQSTSFTDP). Asn-207 carries N-linked (GlcNAc...) asparagine glycosylation. The helical transmembrane segment at 222–243 (FFIVETLCIIWFSFEFLVRFFA) threads the bilayer. A lipid anchor (S-palmitoyl cysteine) is attached at Cys-244. Over 244–254 (CPSKAGFFTNI) the chain is Cytoplasmic. The chain crosses the membrane as a helical span at residues 255 to 275 (MNIIDIVAIIPYFITLGTELA). Residues 276–289 (EKPEDAQQGQQAMS) are Extracellular-facing. Residues 290-310 (LAILRVIRLVRVFRIFKLSRH) form a helical; Voltage-sensor membrane-spanning segment. Residues 311–325 (SKGLQILGQTLKASM) are Cytoplasmic-facing. Residues 312–325 (KGLQILGQTLKASM) form an S4-S5 linker region. The chain crosses the membrane as a helical span at residues 326–347 (RELGLLIFFLFIGVILFSSAVY). At 348–361 (FAEADERDSQFPSI) the chain is on the extracellular side. Positions 362-373 (PDAFWWAVVSMT) form an intramembrane region, helical. The Selectivity filter motif lies at 374–379 (TVGYGD). Residues 374 to 381 (TVGYGDMV) lie within the membrane without spanning it. At 382–388 (PTTIGGK) the chain is on the extracellular side. The chain crosses the membrane as a helical span at residues 389-417 (IVGSLCAIAGVLTIALPVPVIVSNFNYFY). The Cytoplasmic segment spans residues 418–499 (HRETEGEEQA…VNITKMLTDV (82 aa)). Phosphotyrosine is present on Tyr-429. 4 positions are modified to phosphoserine: Ser-434, Ser-440, Ser-441, and Ser-449. Tyr-458 is subject to Phosphotyrosine. Position 468 is a phosphoserine (Ser-468). Positions 497-499 (TDV) match the PDZ-binding motif.

Belongs to the potassium channel family. A (Shaker) (TC 1.A.1.2) subfamily. Kv1.2/KCNA2 sub-subfamily. Homotetramer and heterotetramer with other channel-forming alpha subunits, such as KCNA1, KCNA4, KCNA5, KCNA6 and KCNA7. Channel activity is regulated by interaction with the beta subunits, including KCNAB1 and KCNAB2. Identified in a complex with KCNA1 and KCNAB2. Identified in a complex with KCNA4 and FYN. Identified in a complex with KCNA5 and KCNAB1. Interacts with the beta subunit KCNAB1. Interacts with PTK2B. Interacts (via C-terminus) with CTTN. Interacts (via N-terminal cytoplasmic domain) with RHOA (GTP-bound form); this regulates channel activity by reducing location at the cell surface in response to CHRM1 activation. Interacts with DRD2. Interacts with SIGMAR1; cocaine consumption leads to increased interaction. Interacts with ADAM22. Interacts with CNTNAP2. Interacts (via C-terminus) with the PDZ domains of DLG1, DLG2 and DLG4. Interacts with ADAM11. Interacts with LYNX1. In terms of processing, phosphorylated on tyrosine residues; phosphorylation increases in response to ischemia. Phosphorylated on tyrosine residues by activated PTK2B/PYK2. Phosphorylation on tyrosine residues suppresses ion channel activity. Phosphorylated on tyrosine residues in response to CHRM1 activation; this abolishes interaction with CTTN. This is probably due to endocytosis of the phosphorylated channel subunits. Phosphorylated on serine residues in response to increased cAMP levels; phosphorylation is apparently not catalyzed by PKA. Post-translationally, N-glycosylated, with complex, sialylated N-glycans. As to expression, detected in portal vein myocytes (at protein level). Detected in portal vein. Brain, liver and kidney.

The protein localises to the cell membrane. The protein resides in the membrane. Its subcellular location is the cell projection. It is found in the axon. It localises to the synapse. The protein localises to the presynaptic cell membrane. The protein resides in the synaptosome. Its subcellular location is the endoplasmic reticulum membrane. It is found in the dendrite. It localises to the lamellipodium membrane. The protein localises to the cell junction. The protein resides in the paranodal septate junction. The enzyme catalyses K(+)(in) = K(+)(out). Its activity is regulated as follows. Inhibited by 4-aminopyridine (4-AP). Inhibited by dendrotoxin (DTX) and charybdotoxin (CTX), but not by tetraethylammonium (TEA). Inhibited by tityustoxin-K alpha (TsTX-Kalpha), a toxin that is highly specific for KCNA2. Inhibited by maurotoxin. Inhibited by kappaM conotoxins kappaM-RIIIJ and kappaM-RIIIK. Voltage-gated potassium channel that mediates transmembrane potassium transport in excitable membranes, primarily in the brain and the central nervous system, but also in the cardiovascular system. Prevents aberrant action potential firing and regulates neuronal output. Forms tetrameric potassium-selective channels through which potassium ions pass in accordance with their electrochemical gradient. The channel alternates between opened and closed conformations in response to the voltage difference across the membrane. Can form functional homotetrameric channels and heterotetrameric channels that contain variable proportions of KCNA1, KCNA2, KCNA4, KCNA5, KCNA6, KCNA7, and possibly other family members as well; channel properties depend on the type of alpha subunits that are part of the channel. Channel properties are modulated by cytoplasmic beta subunits that regulate the subcellular location of the alpha subunits and promote rapid inactivation of delayed rectifier potassium channels. In vivo, membranes probably contain a mixture of heteromeric potassium channel complexes, making it difficult to assign currents observed in intact tissues to any particular potassium channel family member. Homotetrameric KCNA2 forms a delayed-rectifier potassium channel that opens in response to membrane depolarization, followed by slow spontaneous channel closure. In contrast, a heteromultimer formed by KCNA2 and KCNA4 shows rapid inactivation. Regulates neuronal excitability and plays a role as pacemaker in the regulation of neuronal action potentials. KCNA2-containing channels play a presynaptic role and prevent hyperexcitability and aberrant action potential firing. Response to toxins that are selective for KCNA2-containing potassium channels suggests that in Purkinje cells, dendritic subthreshold KCNA2-containing potassium channels prevent random spontaneous calcium spikes, suppressing dendritic hyperexcitability without hindering the generation of somatic action potentials, and thereby play an important role in motor coordination. Plays a role in the induction of long-term potentiation of neuron excitability in the CA3 layer of the hippocampus. May function as down-stream effector for G protein-coupled receptors and inhibit GABAergic inputs to basolateral amygdala neurons. May contribute to the regulation of neurotransmitter release, such as gamma-aminobutyric acid (GABA). Contributes to the regulation of the axonal release of the neurotransmitter dopamine. Reduced KCNA2 expression plays a role in the perception of neuropathic pain after peripheral nerve injury, but not acute pain. Plays a role in the regulation of the time spent in non-rapid eye movement (NREM) sleep. In Oryctolagus cuniculus (Rabbit), this protein is Potassium voltage-gated channel subfamily A member 2 (KCNA2).